Here is a 199-residue protein sequence, read N- to C-terminus: Holliday junction branch migration complex subunit RuvA (199 aa).

The domain I stretch occupies residues 1-64 (MIGRITGILL…EDGHFLYGFA (64 aa)). Positions 65–143 (SADERAAFRQ…RALPGFGAST (79 aa)) are domain II. Residues 144–152 (VPGAAAQPA) form a flexible linker region. Residues 152–199 (ADSRSDILNALLALGYSDKEAQSALKAIPPETGVSDGIRQALKLLSKA) form a domain III region.

The protein belongs to the RuvA family. In terms of assembly, homotetramer. Forms an RuvA(8)-RuvB(12)-Holliday junction (HJ) complex. HJ DNA is sandwiched between 2 RuvA tetramers; dsDNA enters through RuvA and exits via RuvB. An RuvB hexamer assembles on each DNA strand where it exits the tetramer. Each RuvB hexamer is contacted by two RuvA subunits (via domain III) on 2 adjacent RuvB subunits; this complex drives branch migration. In the full resolvosome a probable DNA-RuvA(4)-RuvB(12)-RuvC(2) complex forms which resolves the HJ.

It is found in the cytoplasm. In terms of biological role, the RuvA-RuvB-RuvC complex processes Holliday junction (HJ) DNA during genetic recombination and DNA repair, while the RuvA-RuvB complex plays an important role in the rescue of blocked DNA replication forks via replication fork reversal (RFR). RuvA specifically binds to HJ cruciform DNA, conferring on it an open structure. The RuvB hexamer acts as an ATP-dependent pump, pulling dsDNA into and through the RuvAB complex. HJ branch migration allows RuvC to scan DNA until it finds its consensus sequence, where it cleaves and resolves the cruciform DNA. This is Holliday junction branch migration complex subunit RuvA from Aromatoleum aromaticum (strain DSM 19018 / LMG 30748 / EbN1) (Azoarcus sp. (strain EbN1)).